The following is a 197-amino-acid chain: FMN-dependent NADH:quinone oxidoreductase 1 (197 aa).

Residues Ser-10, 16–18, 93–96, and 137–140 contribute to the FMN site; these read SQS, MYNF, and TRGG.

This sequence belongs to the azoreductase type 1 family. Homodimer. The cofactor is FMN.

The enzyme catalyses 2 a quinone + NADH + H(+) = 2 a 1,4-benzosemiquinone + NAD(+). The catalysed reaction is N,N-dimethyl-1,4-phenylenediamine + anthranilate + 2 NAD(+) = 2-(4-dimethylaminophenyl)diazenylbenzoate + 2 NADH + 2 H(+). In terms of biological role, quinone reductase that provides resistance to thiol-specific stress caused by electrophilic quinones. Functionally, also exhibits azoreductase activity. Catalyzes the reductive cleavage of the azo bond in aromatic azo compounds to the corresponding amines. This Photobacterium profundum (strain SS9) protein is FMN-dependent NADH:quinone oxidoreductase 1.